The primary structure comprises 96 residues: Antitoxin TacA3 (96 aa).

The interval 61 to 96 (YLTERDTKMIMEILDNPPAPNEKLLAAAFALPDMKK) is neutralization domain.

The protein belongs to the TacA antitoxin family. As to quaternary structure, forms a complex with cognate toxin TacT3. Forms a 4:2 antitoxin:toxin complex with cognate toxin TacT3. Forms a 4:4 antitoxin:toxin complex with promoter DNA, where 2 TacT3 dimers bridge 2 TacA3 dimers. Only TacA3 contacts promoter DNA.

In terms of biological role, antitoxin component of a type II toxin-antitoxin (TA) system. Counteracts the toxic effect of cognate toxin TacT3, but not TacT1 or TacT2. Plays a role in persister cell formation. Its function is as follows. The TacA3-TacT3 complex both represses and derepresses expression of its own operon. The hexameric 4:2 TacA3-TacT3 complex binds promoter DNA and represses its transcription; both subunits are required. The octomeric 4:4 TacA3-TacT3 complex derepresses the operon. The shift from hexameric to octomeric complex probably alters DNA-binding, leading to dissociation from the operator DNA and derepression. Does not bind the promoter of the TacA1-TacT1 operon. This Salmonella typhimurium (strain 14028s / SGSC 2262) protein is Antitoxin TacA3.